A 365-amino-acid polypeptide reads, in one-letter code: Glutamate 5-kinase 1 (365 aa).

K9 provides a ligand contact to ATP. Residues S49, D136, and N148 each coordinate substrate. ATP is bound by residues 168–169 (TD) and 210–216 (TGGMKSK). The PUA domain occupies 276–353 (SGEIIIDAGA…DELDFEKTFE (78 aa)).

It belongs to the glutamate 5-kinase family.

It is found in the cytoplasm. It catalyses the reaction L-glutamate + ATP = L-glutamyl 5-phosphate + ADP. It participates in amino-acid biosynthesis; L-proline biosynthesis; L-glutamate 5-semialdehyde from L-glutamate: step 1/2. Catalyzes the transfer of a phosphate group to glutamate to form L-glutamate 5-phosphate. The sequence is that of Glutamate 5-kinase 1 from Bacillus subtilis (strain 168).